The primary structure comprises 343 residues: Glyceraldehyde-3-phosphate dehydrogenase (343 aa).

NAD(+) contacts are provided by residues 13–14 (TI) and Gly-111. A D-glyceraldehyde 3-phosphate-binding site is contributed by 140-142 (SCN). Cys-141 functions as the Nucleophile in the catalytic mechanism. Arg-169 serves as a coordination point for NAD(+). A D-glyceraldehyde 3-phosphate-binding site is contributed by 195-196 (HA). Position 303 (Gln-303) interacts with NAD(+).

The protein belongs to the glyceraldehyde-3-phosphate dehydrogenase family. As to quaternary structure, homotetramer.

The protein resides in the cytoplasm. It carries out the reaction D-glyceraldehyde 3-phosphate + phosphate + NADP(+) = (2R)-3-phospho-glyceroyl phosphate + NADPH + H(+). The enzyme catalyses D-glyceraldehyde 3-phosphate + phosphate + NAD(+) = (2R)-3-phospho-glyceroyl phosphate + NADH + H(+). The protein operates within carbohydrate degradation; glycolysis; pyruvate from D-glyceraldehyde 3-phosphate: step 1/5. The protein is Glyceraldehyde-3-phosphate dehydrogenase of Sulfurisphaera tokodaii (strain DSM 16993 / JCM 10545 / NBRC 100140 / 7) (Sulfolobus tokodaii).